The chain runs to 504 residues: Lysine--tRNA ligase (504 aa).

Positions 411 and 418 each coordinate Mg(2+).

The protein belongs to the class-II aminoacyl-tRNA synthetase family. As to quaternary structure, homodimer. It depends on Mg(2+) as a cofactor.

It is found in the cytoplasm. It carries out the reaction tRNA(Lys) + L-lysine + ATP = L-lysyl-tRNA(Lys) + AMP + diphosphate. In Clostridium botulinum (strain Okra / Type B1), this protein is Lysine--tRNA ligase.